A 1028-amino-acid chain; its full sequence is Multidrug resistance protein MdtC (1028 aa).

A run of 12 helical transmembrane segments spans residues 3–23, 333–353, 360–380, 387–407, 431–451, 463–483, 528–548, 853–873, 875–895, 897–917, 953–973, and 984–1004; these read FFALFIYRPVATILISIAITL, EVEQTLVISVALVILVVFLFL, LIPAVAVPVSLIGTFAAMYLC, LSLMALTIATGFVVDDAIVVL, VGFTVLSMSLSLVAVFLPLLL, FAVTLSVAIGISLLVSLTLTP, LVGVVLLGTIALNIWLYISIP, VILILAAIATVYIVLGILYES, VHPLTILSTLPSAGVGALLAL, LFNAPFSLIALIGIMLLIGIV, PIMMTTLAALFGALPLVISGG, and ITIVGGLVMSQLLTLYTTPVV.

The protein belongs to the resistance-nodulation-cell division (RND) (TC 2.A.6) family. MdtC subfamily. Part of a tripartite efflux system composed of MdtA, MdtB and MdtC. MdtC forms a heteromultimer with MdtB.

It is found in the cell inner membrane. The sequence is that of Multidrug resistance protein MdtC from Citrobacter koseri (strain ATCC BAA-895 / CDC 4225-83 / SGSC4696).